Reading from the N-terminus, the 553-residue chain is Urocanate hydratase (553 aa).

NAD(+) is bound by residues 45–46, Gln123, 169–171, Asp189, Arg194, 235–236, 256–260, 266–267, Tyr315, and Gly485; these read GG, GMG, NA, QTSAH, and YV.

It belongs to the urocanase family. The cofactor is NAD(+).

It is found in the cytoplasm. It carries out the reaction 4-imidazolone-5-propanoate = trans-urocanate + H2O. It functions in the pathway amino-acid degradation; L-histidine degradation into L-glutamate; N-formimidoyl-L-glutamate from L-histidine: step 2/3. Catalyzes the conversion of urocanate to 4-imidazolone-5-propionate. This chain is Urocanate hydratase, found in Staphylococcus saprophyticus subsp. saprophyticus (strain ATCC 15305 / DSM 20229 / NCIMB 8711 / NCTC 7292 / S-41).